The primary structure comprises 156 residues: Large ribosomal subunit protein eL24 (156 aa).

Residues 110 to 129 are compositionally biased toward basic and acidic residues; it reads KESKAKKQETQAAKKAEKAK. The tract at residues 110 to 156 is disordered; that stretch reads KESKAKKQETQAAKKAEKAKNAANPKARVTSKQGAKGAPVKVAAKSR. Over residues 130–156 the composition is skewed to low complexity; it reads NAANPKARVTSKQGAKGAPVKVAAKSR.

Belongs to the eukaryotic ribosomal protein eL24 family. As to quaternary structure, component of the large ribosomal subunit (LSU). Mature N.crassa ribosomes consist of a small (40S) and a large (60S) subunit. The 40S small subunit contains 1 molecule of ribosomal RNA (18S rRNA) and at least 32 different proteins. The large 60S subunit contains 3 rRNA molecules (26S, 5.8S and 5S rRNA) and at least 42 different proteins.

The protein resides in the cytoplasm. In terms of biological role, component of the ribosome, a large ribonucleoprotein complex responsible for the synthesis of proteins in the cell. The small ribosomal subunit (SSU) binds messenger RNAs (mRNAs) and translates the encoded message by selecting cognate aminoacyl-transfer RNA (tRNA) molecules. The large subunit (LSU) contains the ribosomal catalytic site termed the peptidyl transferase center (PTC), which catalyzes the formation of peptide bonds, thereby polymerizing the amino acids delivered by tRNAs into a polypeptide chain. The nascent polypeptides leave the ribosome through a tunnel in the LSU and interact with protein factors that function in enzymatic processing, targeting, and the membrane insertion of nascent chains at the exit of the ribosomal tunnel. The chain is Large ribosomal subunit protein eL24 (rpl-24) from Neurospora crassa (strain ATCC 24698 / 74-OR23-1A / CBS 708.71 / DSM 1257 / FGSC 987).